The following is a 725-amino-acid chain: Catalase-peroxidase (725 aa).

Residues 88–211 (WHSAGTYRIQ…LAASEMGLIY (124 aa)) constitute a cross-link (tryptophyl-tyrosyl-methioninium (Trp-Tyr) (with M-237)). Residue His-89 is the Proton acceptor of the active site. Positions 211 to 237 (YVNPEGPGREPDPLKAAQQIRETFKRM) form a cross-link, tryptophyl-tyrosyl-methioninium (Tyr-Met) (with W-88). A heme b-binding site is contributed by His-252.

The protein belongs to the peroxidase family. Peroxidase/catalase subfamily. In terms of assembly, homodimer or homotetramer. It depends on heme b as a cofactor. Formation of the three residue Trp-Tyr-Met cross-link is important for the catalase, but not the peroxidase activity of the enzyme.

It carries out the reaction H2O2 + AH2 = A + 2 H2O. It catalyses the reaction 2 H2O2 = O2 + 2 H2O. Its function is as follows. Bifunctional enzyme with both catalase and broad-spectrum peroxidase activity. The protein is Catalase-peroxidase of Symbiobacterium thermophilum (strain DSM 24528 / JCM 14929 / IAM 14863 / T).